The sequence spans 271 residues: Phthiotriol/phenolphthiotriol dimycocerosates methyltransferase 1 (271 aa).

It belongs to the methyltransferase superfamily. Phthiotriol/phenolphthiotriol dimycocerosates methyltransferase family.

Catalyzes the methylation of the lipid moiety of the intermediate compounds phthiotriol and glycosylated phenolphthiotriol dimycoserosates to form phthiocerol dimycocerosates (DIM A) and glycosylated phenolphthiocerol dimycocerosates (PGL). The polypeptide is Phthiotriol/phenolphthiotriol dimycocerosates methyltransferase 1 (Mycobacterium ulcerans (strain Agy99)).